The chain runs to 311 residues: MPRTADDSWDIATSVGATAVMVALARAAETASETPLIRDQFAEPLVSTPELAAVREQVAAWWAQTDDDDDPDFTVDSQQMTDYLAVRTHFFDSYFIDAVAAGIRQVVILAAGLDSRAYRLDWPGGTTVYEIDLPKVLDYKEHTLARHGAAPVAALRAVPVDLRHDWPQALRDAGFQTSLPTAWLAEGLLPFLPAAAQHALFTAIDANSATGSRVAVEMFGVDEDARRAAEERAQRWARQRAKRQARGQDTSFDPFDLWFDDEGQPDPADWFAAHGWTTDSVQAGAEALRLGRTAHSQEGPFVNRFVTAGKP.

S-adenosyl-L-methionine is bound by residues Asp132 and Asp161 to Leu162.

The protein belongs to the UPF0677 family.

Exhibits S-adenosyl-L-methionine-dependent methyltransferase activity. The protein is Putative S-adenosyl-L-methionine-dependent methyltransferase MMAR_0358 of Mycobacterium marinum (strain ATCC BAA-535 / M).